Here is a 178-residue protein sequence, read N- to C-terminus: Nucleoside-triphosphatase THEP1 (178 aa).

Residues 9–16 (GPVGSIKA) and 101–108 (VIIIDEVG) contribute to the ATP site.

It belongs to the THEP1 NTPase family.

It catalyses the reaction a ribonucleoside 5'-triphosphate + H2O = a ribonucleoside 5'-diphosphate + phosphate + H(+). Has nucleotide phosphatase activity towards ATP, GTP, CTP, TTP and UTP. May hydrolyze nucleoside diphosphates with lower efficiency. The sequence is that of Nucleoside-triphosphatase THEP1 from Thermoplasma volcanium (strain ATCC 51530 / DSM 4299 / JCM 9571 / NBRC 15438 / GSS1).